A 294-amino-acid polypeptide reads, in one-letter code: uncharacterized protein (294 aa).

Active-site charge relay system residues include Thr43 and Tyr104. The active-site Proton donor is Tyr130. Residue Lys158 is the Schiff-base intermediate with substrate of the active site.

Belongs to the DapA family. In terms of assembly, homotetramer.

The protein resides in the cytoplasm. This is an uncharacterized protein from Pyrococcus abyssi (strain GE5 / Orsay).